The sequence spans 24 residues: Probable caffeoyl-CoA O-methyltransferase (24 aa).

Belongs to the class I-like SAM-binding methyltransferase superfamily. Cation-dependent O-methyltransferase family. CCoAMT subfamily. Requires a divalent metal cation as cofactor.

It carries out the reaction (E)-caffeoyl-CoA + S-adenosyl-L-methionine = (E)-feruloyl-CoA + S-adenosyl-L-homocysteine + H(+). It functions in the pathway aromatic compound metabolism; phenylpropanoid biosynthesis. In terms of biological role, methylates caffeoyl-CoA to feruloyl-CoA and 5-hydroxyferuloyl-CoA to sinapoyl-CoA. Plays a role in the synthesis of feruloylated polysaccharides. Involved in the reinforcement of the plant cell wall. Also involved in the responding to wounding or pathogen challenge by the increased formation of cell wall-bound ferulic acid polymers. The chain is Probable caffeoyl-CoA O-methyltransferase from Pinus pinaster (Maritime pine).